We begin with the raw amino-acid sequence, 259 residues long: UPF0246 protein PputW619_0896 (259 aa).

It belongs to the UPF0246 family.

In Pseudomonas putida (strain W619), this protein is UPF0246 protein PputW619_0896.